The chain runs to 194 residues: Fe/S biogenesis protein NfuA (194 aa).

The [4Fe-4S] cluster site is built by C152 and C155.

The protein belongs to the NfuA family. As to quaternary structure, homodimer. [4Fe-4S] cluster is required as a cofactor.

In terms of biological role, involved in iron-sulfur cluster biogenesis. Binds a 4Fe-4S cluster, can transfer this cluster to apoproteins, and thereby intervenes in the maturation of Fe/S proteins. Could also act as a scaffold/chaperone for damaged Fe/S proteins. The protein is Fe/S biogenesis protein NfuA of Stutzerimonas stutzeri (strain A1501) (Pseudomonas stutzeri).